A 361-amino-acid chain; its full sequence is Pyruvate dehydrogenase E1 component subunit beta, mitochondrial (361 aa).

The N-terminal 27 residues, 1 to 27 (MAVNGCMRLLRNGLTSACALEQSVRRL), are a transit peptide targeting the mitochondrion. E90 contributes to the thiamine diphosphate binding site. Positions 143, 191, 192, 194, and 196 each coordinate K(+).

As to quaternary structure, heterotetramer of two PDHA1 and two PDHB subunits. The heterotetramer interacts with DLAT, and is part of the multimeric pyruvate dehydrogenase complex that contains multiple copies of pyruvate dehydrogenase (E1), dihydrolipoamide acetyltransferase (DLAT, E2) and lipoamide dehydrogenase (DLD, E3). Thiamine diphosphate is required as a cofactor.

It is found in the mitochondrion matrix. The enzyme catalyses N(6)-[(R)-lipoyl]-L-lysyl-[protein] + pyruvate + H(+) = N(6)-[(R)-S(8)-acetyldihydrolipoyl]-L-lysyl-[protein] + CO2. Its function is as follows. The pyruvate dehydrogenase complex catalyzes the overall conversion of pyruvate to acetyl-CoA and CO(2), and thereby links the glycolytic pathway to the tricarboxylic cycle. This chain is Pyruvate dehydrogenase E1 component subunit beta, mitochondrial, found in Ascaris suum (Pig roundworm).